Here is a 1955-residue protein sequence, read N- to C-terminus: 227 kDa spindle- and centromere-associated protein (1955 aa).

Coiled coils occupy residues 82-129, 152-317, 385-1747, and 1770-1813; these read KKRI…NDDV, EWAS…ELES, VRNI…LIAL, and ERIV…ERFI. Disordered regions lie at residues 1865–1896 and 1912–1955; these read PTEQHASRGKEAYRTSSTIKSSEGTTRESYTY and MTSS…TFSE. Polar residues predominate over residues 1878–1896; sequence RTSSTIKSSEGTTRESYTY. Basic residues predominate over residues 1938-1948; that stretch reads RKSRPATRKQQ.

Its subcellular location is the cytoplasm. The protein resides in the cytoskeleton. It localises to the microtubule organizing center. It is found in the centrosome. The protein localises to the chromosome. Its subcellular location is the centromere. The protein resides in the kinetochore. It localises to the spindle. May play a role in the organization of the spindle apparatus and its interaction with the centromeres. The sequence is that of 227 kDa spindle- and centromere-associated protein (PUMA1) from Parascaris univalens (Nematode worm).